The following is a 305-amino-acid chain: Ornithine carbamoyltransferase (305 aa).

Carbamoyl phosphate-binding positions include 52 to 55 (STRT), Gln-79, Arg-103, and 130 to 133 (HPCQ). L-ornithine contacts are provided by residues Asn-161, Asp-222, and 226-227 (SM). Residues 262–263 (CL) and Arg-290 contribute to the carbamoyl phosphate site.

It belongs to the aspartate/ornithine carbamoyltransferase superfamily. OTCase family.

The protein resides in the cytoplasm. The catalysed reaction is carbamoyl phosphate + L-ornithine = L-citrulline + phosphate + H(+). It participates in amino-acid biosynthesis; L-arginine biosynthesis; L-arginine from L-ornithine and carbamoyl phosphate: step 1/3. Functionally, reversibly catalyzes the transfer of the carbamoyl group from carbamoyl phosphate (CP) to the N(epsilon) atom of ornithine (ORN) to produce L-citrulline. This is Ornithine carbamoyltransferase from Pelobacter propionicus (strain DSM 2379 / NBRC 103807 / OttBd1).